A 355-amino-acid chain; its full sequence is Phosphate acyltransferase (355 aa).

It belongs to the PlsX family. In terms of assembly, homodimer. Probably interacts with PlsY.

It localises to the cytoplasm. It catalyses the reaction a fatty acyl-[ACP] + phosphate = an acyl phosphate + holo-[ACP]. Its pathway is lipid metabolism; phospholipid metabolism. In terms of biological role, catalyzes the reversible formation of acyl-phosphate (acyl-PO(4)) from acyl-[acyl-carrier-protein] (acyl-ACP). This enzyme utilizes acyl-ACP as fatty acyl donor, but not acyl-CoA. The sequence is that of Phosphate acyltransferase from Azorhizobium caulinodans (strain ATCC 43989 / DSM 5975 / JCM 20966 / LMG 6465 / NBRC 14845 / NCIMB 13405 / ORS 571).